Here is a 266-residue protein sequence, read N- to C-terminus: Type III pantothenate kinase (266 aa).

6–13 lines the ATP pocket; it reads DVGNSHTV. A substrate-binding site is contributed by 112 to 115; the sequence is GIDR. Residue Asp114 is the Proton acceptor of the active site. Position 134 (Asp134) interacts with K(+). Thr137 lines the ATP pocket. Residue Thr190 coordinates substrate.

Belongs to the type III pantothenate kinase family. As to quaternary structure, homodimer. NH4(+) is required as a cofactor. Requires K(+) as cofactor.

The protein resides in the cytoplasm. It carries out the reaction (R)-pantothenate + ATP = (R)-4'-phosphopantothenate + ADP + H(+). The protein operates within cofactor biosynthesis; coenzyme A biosynthesis; CoA from (R)-pantothenate: step 1/5. Functionally, catalyzes the phosphorylation of pantothenate (Pan), the first step in CoA biosynthesis. The polypeptide is Type III pantothenate kinase (Desulfotalea psychrophila (strain LSv54 / DSM 12343)).